The following is a 76-amino-acid chain: Small ribosomal subunit protein bS18 (76 aa).

The protein belongs to the bacterial ribosomal protein bS18 family. Part of the 30S ribosomal subunit. Forms a tight heterodimer with protein bS6.

Binds as a heterodimer with protein bS6 to the central domain of the 16S rRNA, where it helps stabilize the platform of the 30S subunit. The chain is Small ribosomal subunit protein bS18 from Aeromonas salmonicida (strain A449).